The following is a 187-amino-acid chain: Large ribosomal subunit protein bL21 (187 aa).

Residues 157-187 (KVAKKAVKKTVKKATKTGAKKKAAKKTSKKA) form a disordered region.

Belongs to the bacterial ribosomal protein bL21 family. In terms of assembly, part of the 50S ribosomal subunit. Contacts protein L20.

Its function is as follows. This protein binds to 23S rRNA in the presence of protein L20. In Bdellovibrio bacteriovorus (strain ATCC 15356 / DSM 50701 / NCIMB 9529 / HD100), this protein is Large ribosomal subunit protein bL21.